A 648-amino-acid chain; its full sequence is Chaperone protein HtpG (648 aa).

Positions 1 to 349 (MTTEHAAGAQ…SSDLPLNVSR (349 aa)) are a; substrate-binding. Positions 350–570 (EILQESKDID…EHDVGMNLAR (221 aa)) are b. Residues 571-648 (ILKAAGQQAP…MAMGGSAGTD (78 aa)) form a c region.

The protein belongs to the heat shock protein 90 family. As to quaternary structure, homodimer.

The protein localises to the cytoplasm. Its function is as follows. Molecular chaperone. Has ATPase activity. The polypeptide is Chaperone protein HtpG (Aromatoleum aromaticum (strain DSM 19018 / LMG 30748 / EbN1) (Azoarcus sp. (strain EbN1))).